The sequence spans 194 residues: Rho-related protein racC (194 aa).

GTP is bound by residues Ala17, Gly19, Lys20, Thr21, Cys22, Glu34, Tyr36, Thr39, Gly64, Lys120, Asp122, Ala163, and Lys164. Mg(2+) is bound at residue Thr21. 2 short sequence motifs (switch) span residues 30-41 (RKFPEDYIPTVF) and 61-79 (DTAGQEEYDQLRPLSYSSA). Thr39 contacts Mg(2+). Cys191 carries the cysteine methyl ester modification. The S-geranylgeranyl cysteine moiety is linked to residue Cys191. Positions 192 to 194 (ALL) are cleaved as a propeptide — removed in mature form.

The protein belongs to the small GTPase superfamily. Rho family. Interacts (GTP-bound form) with PAK4 (via CRIB domain). Interacts (GTP-bound form) with PAK5 (via CRIB domain). Mg(2+) is required as a cofactor.

The protein localises to the cell membrane. The protein resides in the cytoplasm. Its subcellular location is the cytoskeleton. The enzyme catalyses GTP + H2O = GDP + phosphate + H(+). Regulated by guanine nucleotide exchange factors (GEFs) which promote the exchange of bound GDP for free GTP, GTPase activating proteins (GAPs) which increase the GTP hydrolysis activity, and GDP dissociation inhibitors which inhibit the dissociation of the nucleotide from the GTPase. Its function is as follows. Small GTPase which cycles between active GTP-bound and inactive GDP-bound states. This chain is Rho-related protein racC, found in Entamoeba histolytica (strain ATCC 30459 / HM-1:IMSS / ABRM).